Here is a 465-residue protein sequence, read N- to C-terminus: Chromosomal replication initiator protein DnaA (465 aa).

Residues 1-80 (MLWTDCLTRL…VEILVDSRPG (80 aa)) are domain I, interacts with DnaA modulators. Residues 80-127 (GAILSPAEQPATTTAALSSTPVVPQRVKKEVVEPAATQSNKILNSKKR) are domain II. Residues 128–345 (LLNPLFTFSL…GALNKVVAIA (218 aa)) are domain III, AAA+ region. Gly173, Gly175, Lys176, and Thr177 together coordinate ATP. Residues 346–465 (RFKGSQIDLD…YKNLLRLLQS (120 aa)) are domain IV, binds dsDNA.

This sequence belongs to the DnaA family. Oligomerizes as a right-handed, spiral filament on DNA at oriC.

The protein resides in the cytoplasm. Functionally, plays an essential role in the initiation and regulation of chromosomal replication. ATP-DnaA binds to the origin of replication (oriC) to initiate formation of the DNA replication initiation complex once per cell cycle. Binds the DnaA box (a 9 base pair repeat at the origin) and separates the double-stranded (ds)DNA. Forms a right-handed helical filament on oriC DNA; dsDNA binds to the exterior of the filament while single-stranded (ss)DNA is stabiized in the filament's interior. The ATP-DnaA-oriC complex binds and stabilizes one strand of the AT-rich DNA unwinding element (DUE), permitting loading of DNA polymerase. After initiation quickly degrades to an ADP-DnaA complex that is not apt for DNA replication. Binds acidic phospholipids. This chain is Chromosomal replication initiator protein DnaA, found in Acinetobacter baylyi (strain ATCC 33305 / BD413 / ADP1).